Consider the following 160-residue polypeptide: Cytochrome b6-f complex subunit 4 (160 aa).

3 consecutive transmembrane segments (helical) span residues 36–56, 95–115, and 131–151; these read LLYI…GLAV, LLGV…PFLE, and TVFL…ALPI.

The protein belongs to the cytochrome b family. PetD subfamily. As to quaternary structure, the 4 large subunits of the cytochrome b6-f complex are cytochrome b6, subunit IV (17 kDa polypeptide, petD), cytochrome f and the Rieske protein, while the 4 small subunits are petG, petL, petM and petN. The complex functions as a dimer.

The protein localises to the plastid. It is found in the chloroplast thylakoid membrane. Its function is as follows. Component of the cytochrome b6-f complex, which mediates electron transfer between photosystem II (PSII) and photosystem I (PSI), cyclic electron flow around PSI, and state transitions. This Marchantia polymorpha (Common liverwort) protein is Cytochrome b6-f complex subunit 4.